The sequence spans 428 residues: Serine--tRNA ligase (428 aa).

Residue 236–238 (TAE) coordinates L-serine. Position 267–269 (267–269 (RSE)) interacts with ATP. E290 contacts L-serine. 354–357 (EISS) provides a ligand contact to ATP. Position 388 (S388) interacts with L-serine.

This sequence belongs to the class-II aminoacyl-tRNA synthetase family. Type-1 seryl-tRNA synthetase subfamily. As to quaternary structure, homodimer. The tRNA molecule binds across the dimer.

It localises to the cytoplasm. The catalysed reaction is tRNA(Ser) + L-serine + ATP = L-seryl-tRNA(Ser) + AMP + diphosphate + H(+). It carries out the reaction tRNA(Sec) + L-serine + ATP = L-seryl-tRNA(Sec) + AMP + diphosphate + H(+). It functions in the pathway aminoacyl-tRNA biosynthesis; selenocysteinyl-tRNA(Sec) biosynthesis; L-seryl-tRNA(Sec) from L-serine and tRNA(Sec): step 1/1. Its function is as follows. Catalyzes the attachment of serine to tRNA(Ser). Is also able to aminoacylate tRNA(Sec) with serine, to form the misacylated tRNA L-seryl-tRNA(Sec), which will be further converted into selenocysteinyl-tRNA(Sec). The chain is Serine--tRNA ligase from Psychrobacter sp. (strain PRwf-1).